We begin with the raw amino-acid sequence, 106 residues long: Small ribosomal subunit protein uS10 (106 aa).

It belongs to the universal ribosomal protein uS10 family. Part of the 30S ribosomal subunit.

Involved in the binding of tRNA to the ribosomes. The polypeptide is Small ribosomal subunit protein uS10 (Prochlorococcus marinus (strain MIT 9312)).